The chain runs to 130 residues: Large ribosomal subunit protein bL17 (130 aa).

This sequence belongs to the bacterial ribosomal protein bL17 family. Part of the 50S ribosomal subunit. Contacts protein L32.

The chain is Large ribosomal subunit protein bL17 from Nitrosomonas eutropha (strain DSM 101675 / C91 / Nm57).